A 236-amino-acid polypeptide reads, in one-letter code: 1-(5-phosphoribosyl)-5-[(5-phosphoribosylamino)methylideneamino] imidazole-4-carboxamide isomerase (236 aa).

Residue Asp8 is the Proton acceptor of the active site. Asp127 serves as the catalytic Proton donor.

This sequence belongs to the HisA/HisF family.

Its subcellular location is the cytoplasm. The catalysed reaction is 1-(5-phospho-beta-D-ribosyl)-5-[(5-phospho-beta-D-ribosylamino)methylideneamino]imidazole-4-carboxamide = 5-[(5-phospho-1-deoxy-D-ribulos-1-ylimino)methylamino]-1-(5-phospho-beta-D-ribosyl)imidazole-4-carboxamide. The protein operates within amino-acid biosynthesis; L-histidine biosynthesis; L-histidine from 5-phospho-alpha-D-ribose 1-diphosphate: step 4/9. This Sulfurimonas denitrificans (strain ATCC 33889 / DSM 1251) (Thiomicrospira denitrificans (strain ATCC 33889 / DSM 1251)) protein is 1-(5-phosphoribosyl)-5-[(5-phosphoribosylamino)methylideneamino] imidazole-4-carboxamide isomerase.